The primary structure comprises 767 residues: Polyribonucleotide nucleotidyltransferase (767 aa).

Positions 488 and 494 each coordinate Mg(2+). In terms of domain architecture, KH spans 555–614 (PRLYTMKINPEKIRDVIGKGGSVIRALTEETGCQIDIGEDGTITIASTDADKAELAKKRI). One can recognise an S1 motif domain in the interval 624–692 (GKVYEGPVVK…EKGRIKLSMK (69 aa)). The span at 700–742 (GMEFEERAPRREGGFGDRGDRGDRGPRRDRGGDRPERGERPAR) shows a compositional bias: basic and acidic residues. The segment at 700-767 (GMEFEERAPR…QPQQQQGQQQ (68 aa)) is disordered. Over residues 752-767 (GAPAAGQPQQQQGQQQ) the composition is skewed to low complexity.

It belongs to the polyribonucleotide nucleotidyltransferase family. Requires Mg(2+) as cofactor.

The protein resides in the cytoplasm. It catalyses the reaction RNA(n+1) + phosphate = RNA(n) + a ribonucleoside 5'-diphosphate. Involved in mRNA degradation. Catalyzes the phosphorolysis of single-stranded polyribonucleotides processively in the 3'- to 5'-direction. The sequence is that of Polyribonucleotide nucleotidyltransferase from Leptothrix cholodnii (strain ATCC 51168 / LMG 8142 / SP-6) (Leptothrix discophora (strain SP-6)).